The following is a 205-amino-acid chain: MTAHNFFWDGDWFSPQASQDQNLIAQLDFVPGLRELLFIRQAHALEHGTVWVLTELAERYPTAWRHHYAELSGMSTGQGFYLFGGVDKTDLYRAVSTAGDRLRSGEWNLAIHPRCGTNISVTLLLTAGLAGGAAWLLPKDPLTQLFGMGTAAATAWAIAPDLGKYAQQHITTAIPLNLALEEIQENTDESGNPSHFVRLRWQDAQ.

This is an uncharacterized protein from Picosynechococcus sp. (strain ATCC 27264 / PCC 7002 / PR-6) (Agmenellum quadruplicatum).